The following is a 521-amino-acid chain: Apolipoprotein N-acyltransferase (521 aa).

Transmembrane regions (helical) follow at residues 24-44 (IKETGYSILGFVAYVPLFIAL), 71-91 (WLGFFHAFGWITFIGVIIGYI), 128-148 (IGFLAYPWGLAAFTVNNFNNL), 151-171 (IADIFGVFFVSFAVYFLNSGI), and 182-202 (NLLNIAFPTLLITASFTYGMI). Positions 218 to 472 (LNIAAIQLNT…KGYLLSTVKL (255 aa)) constitute a CN hydrolase domain. The active-site Proton acceptor is the glutamate 263. The active site involves lysine 331. The active-site Nucleophile is cysteine 383.

Belongs to the CN hydrolase family. Apolipoprotein N-acyltransferase subfamily.

The protein resides in the cell inner membrane. The catalysed reaction is N-terminal S-1,2-diacyl-sn-glyceryl-L-cysteinyl-[lipoprotein] + a glycerophospholipid = N-acyl-S-1,2-diacyl-sn-glyceryl-L-cysteinyl-[lipoprotein] + a 2-acyl-sn-glycero-3-phospholipid + H(+). It functions in the pathway protein modification; lipoprotein biosynthesis (N-acyl transfer). In terms of biological role, catalyzes the phospholipid dependent N-acylation of the N-terminal cysteine of apolipoprotein, the last step in lipoprotein maturation. The chain is Apolipoprotein N-acyltransferase from Borreliella burgdorferi (strain ATCC 35210 / DSM 4680 / CIP 102532 / B31) (Borrelia burgdorferi).